A 122-amino-acid chain; its full sequence is Acidic phospholipase A2 CbIalpha (122 aa).

7 disulfides stabilise this stretch: cysteine 26/cysteine 115, cysteine 28/cysteine 44, cysteine 43/cysteine 95, cysteine 49/cysteine 122, cysteine 50/cysteine 88, cysteine 57/cysteine 81, and cysteine 75/cysteine 86. Ca(2+) is bound by residues tyrosine 27, glycine 29, and glycine 31. Residue histidine 47 is part of the active site. Aspartate 48 is a binding site for Ca(2+). Aspartate 89 is a catalytic residue.

Belongs to the phospholipase A2 family. Group II subfamily. D49 sub-subfamily. Heterodimer of an acidic subunit (CbIalpha or CbIbeta) and a basic subunit (CbII). The acidic subunit is non-toxic, and increases the toxicity of the basic subunit. The cofactor is Ca(2+). As to expression, expressed by the venom gland.

It localises to the secreted. It carries out the reaction a 1,2-diacyl-sn-glycero-3-phosphocholine + H2O = a 1-acyl-sn-glycero-3-phosphocholine + a fatty acid + H(+). In terms of biological role, heterodimer: presynaptic neurotoxin. Monomer: Snake venom phospholipase A2 (PLA2) is inactive towards micellar phosphatidylcholine but is weakly active towards non-micellar dithiolecithin. PLA2 catalyzes the calcium-dependent hydrolysis of the 2-acyl groups in 3-sn-phosphoglycerides. This Pseudocerastes fieldi (Field's horned viper) protein is Acidic phospholipase A2 CbIalpha.